We begin with the raw amino-acid sequence, 273 residues long: 29 kDa ribonucleoprotein A, chloroplastic (273 aa).

A chloroplast-targeting transit peptide spans 1 to 58 (MASSASSLHFLSLTPQTLPLPKPTSQTTSLSFFSLPPSSLNLSLSSSSSCFSSRFVRK). In terms of domain architecture, RRM 1 spans 87–165 (LKIFVGNLPF…RALRVNSGPP (79 aa)). The interval 156-181 (RALRVNSGPPPEKRENSSFRGGSRGG) is disordered. The linker (Gly-rich) stretch occupies residues 166-187 (PEKRENSSFRGGSRGGGSFDSS). In terms of domain architecture, RRM 2 spans 188–266 (NRVYVGNLAW…RAIRVSPAEA (79 aa)).

It localises to the plastid. The protein localises to the chloroplast. In terms of biological role, could be involved in splicing and/or processing of chloroplast RNA's. The chain is 29 kDa ribonucleoprotein A, chloroplastic from Nicotiana sylvestris (Wood tobacco).